A 216-amino-acid polypeptide reads, in one-letter code: Probable GTP-binding protein EngB (216 aa).

Residues 21-192 form the EngB-type G domain; it reads DAPQIALAGR…WRELRALAAG (172 aa). GTP-binding positions include 29–36, 56–60, 75–78, 142–145, and 170–173; these read GRSNVGKS, GKTRS, DLPG, TKGD, and VTAS. Residues S36 and T58 each coordinate Mg(2+). Positions 195 to 216 are disordered; it reads SADDEAEDAPSDTIDAIDDVTA. Residues 196–216 are compositionally biased toward acidic residues; it reads ADDEAEDAPSDTIDAIDDVTA.

Belongs to the TRAFAC class TrmE-Era-EngA-EngB-Septin-like GTPase superfamily. EngB GTPase family. It depends on Mg(2+) as a cofactor.

Its function is as follows. Necessary for normal cell division and for the maintenance of normal septation. This chain is Probable GTP-binding protein EngB, found in Nitratidesulfovibrio vulgaris (strain DP4) (Desulfovibrio vulgaris).